The primary structure comprises 301 residues: tRNA U34 carboxymethyltransferase (301 aa).

Carboxy-S-adenosyl-L-methionine-binding positions include K70, W84, K89, G108, 130–132 (DPS), 157–158 (VE), Y177, and R292.

The protein belongs to the class I-like SAM-binding methyltransferase superfamily. CmoB family. Homotetramer.

The catalysed reaction is carboxy-S-adenosyl-L-methionine + 5-hydroxyuridine(34) in tRNA = 5-carboxymethoxyuridine(34) in tRNA + S-adenosyl-L-homocysteine + H(+). Functionally, catalyzes carboxymethyl transfer from carboxy-S-adenosyl-L-methionine (Cx-SAM) to 5-hydroxyuridine (ho5U) to form 5-carboxymethoxyuridine (cmo5U) at position 34 in tRNAs. This is tRNA U34 carboxymethyltransferase from Sulfurovum sp. (strain NBC37-1).